We begin with the raw amino-acid sequence, 159 residues long: 6,7-dimethyl-8-ribityllumazine synthase (159 aa).

5-amino-6-(D-ribitylamino)uracil is bound by residues F22, 57–59 (AVE), and 81–83 (AVI). Residue 86–87 (GT) participates in (2S)-2-hydroxy-3-oxobutyl phosphate binding. The Proton donor role is filled by H89. F114 is a 5-amino-6-(D-ribitylamino)uracil binding site. A (2S)-2-hydroxy-3-oxobutyl phosphate-binding site is contributed by R128.

It belongs to the DMRL synthase family. Forms an icosahedral capsid composed of 60 subunits, arranged as a dodecamer of pentamers.

It carries out the reaction (2S)-2-hydroxy-3-oxobutyl phosphate + 5-amino-6-(D-ribitylamino)uracil = 6,7-dimethyl-8-(1-D-ribityl)lumazine + phosphate + 2 H2O + H(+). It participates in cofactor biosynthesis; riboflavin biosynthesis; riboflavin from 2-hydroxy-3-oxobutyl phosphate and 5-amino-6-(D-ribitylamino)uracil: step 1/2. In terms of biological role, catalyzes the formation of 6,7-dimethyl-8-ribityllumazine by condensation of 5-amino-6-(D-ribitylamino)uracil with 3,4-dihydroxy-2-butanone 4-phosphate. This is the penultimate step in the biosynthesis of riboflavin. The sequence is that of 6,7-dimethyl-8-ribityllumazine synthase from Shewanella baltica (strain OS155 / ATCC BAA-1091).